A 162-amino-acid polypeptide reads, in one-letter code: MGLETEKADVQLFMDDDSYSHHSGLEYADPEKFVDSGQDRDPHRLNSHLKLGFEDVIAEPVTTHSFDKVWICSHALFEISKYVMYKFLTVFLSIPLAFLAGILFATLSCLHIWIIMPFVKTCLMVLPSVQTIWKSVTDAIIAPLCTSIGRSFSSVSLQLSHD.

Residues 1–86 (MGLETEKADV…FEISKYVMYK (86 aa)) lie on the Cytoplasmic side of the membrane. Tyr-19 bears the Phosphotyrosine; by SRC mark. Phosphoserine occurs at positions 20 and 23. Phosphotyrosine; by SRC is present on Tyr-27. Ser-36 is modified (phosphoserine). Residues 87–107 (FLTVFLSIPLAFLAGILFATL) constitute an intramembrane region (helical). The Cytoplasmic segment spans residues 108–162 (SCLHIWIIMPFVKTCLMVLPSVQTIWKSVTDAIIAPLCTSIGRSFSSVSLQLSHD).

It belongs to the caveolin family. Monomer or homodimer. Interacts with CAV1; the interaction forms a stable heterooligomeric complex that is required for targeting to lipid rafts and for caveolae formation. Tyrosine phosphorylated forms do not form heterooligomers with the Tyr-19-phosphorylated form existing as a monomer or dimer, and the Tyr-27-form as a monomer only. Interacts (tyrosine phosphorylated form) with the SH2 domain-containing proteins, RASA1, NCK1 and SRC. Interacts (tyrosine phosphorylated form) with INSR, the interaction (Tyr-27-phosphorylated form) is increased on insulin stimulation. Interacts (Tyr-19 phosphorylated form) with MAPK1 (phosphorylated form); the interaction, promoted by insulin, leads to nuclear location and MAPK1 activation. Interacts with STAT3; the interaction is increased on insulin-induced tyrosine phosphorylation leading to STAT activation. In terms of processing, phosphorylated on serine and tyrosine residues. CAV1 promotes phosphorylation on Ser-23 which then targets the complex to the plasma membrane, lipid rafts and caveolae. Phosphorylation on Ser-36 appears to modulate mitosis in endothelial cells. Phosphorylation on both Tyr-19 and Tyr-27 is required for insulin-induced 'Ser-727' phosphorylation of STAT3 and its activation. Phosphorylation on Tyr-19 is required for insulin-induced phosphorylation of MAPK1 and DNA binding of STAT3. Tyrosine phosphorylation is induced by both EGF and insulin (By. similarity).

The protein localises to the nucleus. It localises to the cytoplasm. Its subcellular location is the golgi apparatus membrane. It is found in the cell membrane. The protein resides in the membrane. The protein localises to the caveola. In terms of biological role, may act as a scaffolding protein within caveolar membranes. Interacts directly with G-protein alpha subunits and can functionally regulate their activity. Acts as an accessory protein in conjunction with CAV1 in targeting to lipid rafts and driving caveolae formation. The Ser-36 phosphorylated form has a role in modulating mitosis in endothelial cells. Positive regulator of cellular mitogenesis of the MAPK signaling pathway. Required for the insulin-stimulated nuclear translocation and activation of MAPK1 and STAT3, and the subsequent regulation of cell cycle progression. The sequence is that of Caveolin-2 (CAV2) from Saimiri boliviensis boliviensis (Bolivian squirrel monkey).